A 574-amino-acid polypeptide reads, in one-letter code: Frizzled and smoothened-like protein G (574 aa).

An N-terminal signal peptide occupies residues 1 to 19; that stretch reads MKSIIFITFFIFFLKKLNG. Topologically, residues 20 to 246 are extracellular; sequence LPNGYGVGLV…EKWNQIENLS (227 aa). Residues 30–181 form the FZ domain; the sequence is DPNGQCMNYI…GLYEVPCFNP (152 aa). Cystine bridges form between cysteine 35–cysteine 109, cysteine 48–cysteine 102, cysteine 91–cysteine 138, and cysteine 127–cysteine 178. N-linked (GlcNAc...) asparagine glycans are attached at residues asparagine 119, asparagine 161, asparagine 187, asparagine 206, asparagine 233, and asparagine 244. A helical transmembrane segment spans residues 247 to 267; sequence KVLSTISFVCSIYNILSFGIL. Residues 268 to 273 are Cytoplasmic-facing; the sequence is KKKKTK. A helical membrane pass occupies residues 274-294; it reads YTICISALSASVALINLGDII. Over 295 to 324 the chain is Extracellular; it reads KIGVGYEKVLCPEPGRFATQVDDPLCGLTA. Residues 325 to 345 traverse the membrane as a helical segment; the sequence is ALFHVGICSTVLWTTTMAIYL. Over 346-358 the chain is Cytoplasmic; it reads YSAIKNIKLFKFR. Residues 359–379 traverse the membrane as a helical segment; it reads YFIIFNTGFSLTSLIIAASAS. The Extracellular portion of the chain corresponds to 380–401; sequence KFEAGTGSIECWIRDRWYSICL. A helical transmembrane segment spans residues 402–422; that stretch reads FWLPCGICLLIGTICIASVIV. Residues 423 to 445 lie on the Cytoplasmic side of the membrane; sequence EIYKVSKNIKLSESETIMRQIKP. The helical transmembrane segment at 446 to 466 threads the bilayer; the sequence is IISVILVSGSFTYLFIIFFDI. The Extracellular segment spans residues 467–502; sequence ERNFGGYRSAVTDYVLCLLNSTDNGIECHTSGPSYN. N-linked (GlcNAc...) asparagine glycosylation occurs at asparagine 486. The chain crosses the membrane as a helical span at residues 503–523; it reads PYFMFYFFMRFFGILFFLIYG. The Cytoplasmic segment spans residues 524 to 574; the sequence is TSKNARDSWYELFIKIKVSLSETSSTISNNSGGGSSQQKQQQQNEIKLEKI. Residues 550–568 show a composition bias toward low complexity; it reads ISNNSGGGSSQQKQQQQNE. Residues 550 to 574 are disordered; it reads ISNNSGGGSSQQKQQQQNEIKLEKI.

It belongs to the G-protein coupled receptor Fz/Smo family.

Its subcellular location is the membrane. The chain is Frizzled and smoothened-like protein G (fslG) from Dictyostelium discoideum (Social amoeba).